Reading from the N-terminus, the 616-residue chain is Proline--tRNA ligase (616 aa).

This sequence belongs to the class-II aminoacyl-tRNA synthetase family. ProS type 1 subfamily. As to quaternary structure, homodimer.

The protein resides in the cytoplasm. The catalysed reaction is tRNA(Pro) + L-proline + ATP = L-prolyl-tRNA(Pro) + AMP + diphosphate. Functionally, catalyzes the attachment of proline to tRNA(Pro) in a two-step reaction: proline is first activated by ATP to form Pro-AMP and then transferred to the acceptor end of tRNA(Pro). As ProRS can inadvertently accommodate and process non-cognate amino acids such as alanine and cysteine, to avoid such errors it has two additional distinct editing activities against alanine. One activity is designated as 'pretransfer' editing and involves the tRNA(Pro)-independent hydrolysis of activated Ala-AMP. The other activity is designated 'posttransfer' editing and involves deacylation of mischarged Ala-tRNA(Pro). The misacylated Cys-tRNA(Pro) is not edited by ProRS. The chain is Proline--tRNA ligase from Lactococcus lactis subsp. cremoris (strain MG1363).